We begin with the raw amino-acid sequence, 506 residues long: MPNEIFTINLNAQAIIPEAFILLGIVGTLLVDLAGEKTASRWAPVICYISLGSSLISLALQWSNPVNSAFLGSFNSDNLAIAFRSIIALSTLISLLISWRYTEQSGSPIGEFAAIVLSATLGAMLLCGSTDLVSVFISLETLSVASYCLSGYLKRDPRSSEAALKYLLVGSAAAAVYLYGSSFLYGLSGSTNLSTIGVEIINKPSFITSLSLVFVLSTVAFKIAAVPFHQWTPDVYEGSPTPVVAFLSVGSKTAGFAFAIRILSTTFSSFDEQWKLLFTILAILSMALGNIVALAQTSMKRMLAYSSIGQAGFVMIGIVSGTQDGLSSAVLYLAAYLFMNLGAFSCVILFSLRTGSDRITDYSGLYQKDPLITLGLSLCLLSLGGLPPMLGFFGKIYLFFAGWANHQYLLVVVGLITSVISIYYYISVIKMMVVKEPQEASEIVKSYPEINWNIIGLPPLRIALYTCIAVTALGGILSNPLFKLANSAVSETPFLQNILAITNNVL.

14 helical membrane passes run 14–34 (AIIP…VDLA), 42–62 (WAPV…ALQW), 79–99 (LAIA…LISW), 108–128 (PIGE…LLCG), 132–152 (LVSV…LSGY), 167–187 (LLVG…LYGL), 206–226 (FITS…IAAV), 240–260 (PTPV…AFAI), 276–296 (LLFT…ALAQ), 302–322 (MLAY…VSGT), 330–350 (VLYL…VILF), 374–394 (LGLS…GFFG), 409–429 (LLVV…ISVI), and 462–482 (IALY…NPLF).

Belongs to the complex I subunit 2 family. As to quaternary structure, NDH-1 can be composed of about 15 different subunits; different subcomplexes with different compositions have been identified which probably have different functions.

The protein localises to the cellular thylakoid membrane. It catalyses the reaction a plastoquinone + NADH + (n+1) H(+)(in) = a plastoquinol + NAD(+) + n H(+)(out). The catalysed reaction is a plastoquinone + NADPH + (n+1) H(+)(in) = a plastoquinol + NADP(+) + n H(+)(out). Functionally, NDH-1 shuttles electrons from an unknown electron donor, via FMN and iron-sulfur (Fe-S) centers, to quinones in the respiratory and/or the photosynthetic chain. The immediate electron acceptor for the enzyme in this species is believed to be plastoquinone. Couples the redox reaction to proton translocation, and thus conserves the redox energy in a proton gradient. Cyanobacterial NDH-1 also plays a role in inorganic carbon-concentration. The polypeptide is NAD(P)H-quinone oxidoreductase subunit 2 (Prochlorococcus marinus subsp. pastoris (strain CCMP1986 / NIES-2087 / MED4)).